An 89-amino-acid polypeptide reads, in one-letter code: UPF0213 protein LSEI_1587 (89 aa).

Residues 4-79 form the GIY-YIG domain; it reads KTYYFYVLLC…KHQTRHRKEV (76 aa).

This sequence belongs to the UPF0213 family.

In Lacticaseibacillus paracasei (strain ATCC 334 / BCRC 17002 / CCUG 31169 / CIP 107868 / KCTC 3260 / NRRL B-441) (Lactobacillus paracasei), this protein is UPF0213 protein LSEI_1587.